The following is a 67-amino-acid chain: COP9 signalosome complex subunit 9 homolog (67 aa).

The segment at 1–31 (MKPSLAADEMFSEGPGYMEMDESGGATGMMM) is disordered.

The protein belongs to the CSN9 family. In terms of assembly, probable component of the COP9 signalosome (CSN) complex.

Component of the COP9 signalosome complex (CSN), a complex involved in various cellular and developmental processes. The CSN complex is an essential regulator of the ubiquitin (Ubl) conjugation pathway by mediating the deneddylation of the cullin subunits of SCF-type E3 ligase complexes, leading to decrease the Ubl ligase activity. This chain is COP9 signalosome complex subunit 9 homolog, found in Drosophila melanogaster (Fruit fly).